The following is a 149-amino-acid chain: MKNLISFFDRSKGKWISQRTTYELSNKNMSSVQSQMTMKIGNSLSGSIILASLNWGDIYRQVAHYAKNHSRSEYDNKFNLQFGNQLNNHKLLTLCIVTDPSLISFKTRYGSTTIDETYWFATNNLRLSTSIVKRFNTCVAVSFCSEIKV.

The protein belongs to the CpcS/CpeS biliprotein lyase family.

The protein resides in the plastid. Its subcellular location is the chloroplast. Might function to covalently attach a chromophore to Cys residue(s) of phycobiliproteins. In Pyropia yezoensis (Susabi-nori), this protein is Chromophore lyase CpcS/CpeS homolog.